We begin with the raw amino-acid sequence, 434 residues long: Nicotinate phosphoribosyltransferase (434 aa).

At His242 the chain carries Phosphohistidine; by autocatalysis.

The protein belongs to the NAPRTase family. Post-translationally, transiently phosphorylated on a His residue during the reaction cycle. Phosphorylation strongly increases the affinity for substrates and increases the rate of nicotinate D-ribonucleotide production. Dephosphorylation regenerates the low-affinity form of the enzyme, leading to product release.

The enzyme catalyses nicotinate + 5-phospho-alpha-D-ribose 1-diphosphate + ATP + H2O = nicotinate beta-D-ribonucleotide + ADP + phosphate + diphosphate. The protein operates within cofactor biosynthesis; NAD(+) biosynthesis; nicotinate D-ribonucleotide from nicotinate: step 1/1. In terms of biological role, catalyzes the synthesis of beta-nicotinate D-ribonucleotide from nicotinate and 5-phospho-D-ribose 1-phosphate at the expense of ATP. This is Nicotinate phosphoribosyltransferase from Bradyrhizobium diazoefficiens (strain JCM 10833 / BCRC 13528 / IAM 13628 / NBRC 14792 / USDA 110).